Here is a 299-residue protein sequence, read N- to C-terminus: 33 kDa chaperonin (299 aa).

Intrachain disulfides connect Cys240-Cys242 and Cys273-Cys276.

It belongs to the HSP33 family. Under oxidizing conditions two disulfide bonds are formed involving the reactive cysteines. Under reducing conditions zinc is bound to the reactive cysteines and the protein is inactive.

It is found in the cytoplasm. Redox regulated molecular chaperone. Protects both thermally unfolding and oxidatively damaged proteins from irreversible aggregation. Plays an important role in the bacterial defense system toward oxidative stress. The sequence is that of 33 kDa chaperonin from Thermosynechococcus vestitus (strain NIES-2133 / IAM M-273 / BP-1).